A 426-amino-acid chain; its full sequence is Phosphomethylpyrimidine synthase (426 aa).

Substrate-binding positions include M94, Y123, H162, 184–186 (SRG), 225–228 (NGMR), and E264. H268 provides a ligand contact to Zn(2+). Y291 serves as a coordination point for substrate. Residue H332 participates in Zn(2+) binding. [4Fe-4S] cluster is bound by residues C406, C409, and C413.

It belongs to the ThiC family. Requires [4Fe-4S] cluster as cofactor.

The enzyme catalyses 5-amino-1-(5-phospho-beta-D-ribosyl)imidazole + S-adenosyl-L-methionine = 4-amino-2-methyl-5-(phosphooxymethyl)pyrimidine + CO + 5'-deoxyadenosine + formate + L-methionine + 3 H(+). It participates in cofactor biosynthesis; thiamine diphosphate biosynthesis. Its function is as follows. Catalyzes the synthesis of the hydroxymethylpyrimidine phosphate (HMP-P) moiety of thiamine from aminoimidazole ribotide (AIR) in a radical S-adenosyl-L-methionine (SAM)-dependent reaction. The protein is Phosphomethylpyrimidine synthase of Methanospirillum hungatei JF-1 (strain ATCC 27890 / DSM 864 / NBRC 100397 / JF-1).